A 936-amino-acid chain; its full sequence is MIIHGFCTGTRHKHKLRKTFIMLGAGLGLFFSVNQNSFANGENYFKLRADSKLINNNIAQDRLFYTLKTGESVAQLSKSQGISVPVIWSLNKHLYSSESEMMKASPGQQIILPLKKLSAEYSTLPILGTAPVVAAADVAGHTKKMSQDTTKSNTSDDKALNYAAQQAASLGSQLQSRSLNGDYAKDTALSMAGNQASSQMQAWLQHYGTAEVNLQSGNNFDGSSLDFLLPFYDTENMLAFGQVGARYIDSRFTANLGAGQRFFLPENMLGYNVFIDQDFSGNNTRLGIGGEYWRDYFKSSVNGYFRMSGWHESYNKKDYDERPANGFDIRFNGYLPSYPALGGKLMYEQYYGDNVALFNADKLYSNPGAVTVGVNYTPIPLVTMGIDYRHGTGNENDLLYSMQFHYQFDKPWSQQIEPQYVNELRTLSGSRYDLVQRNNNIILDYKKQDILSMNIPHNINGTEHSTHKIQLIVKSKYGLERIVWDDSTLRTQGGQIQHSERKAHNDYQAILPAYVQGGSNVYKVTRRAYDRNGNSSNNVQLTITVLSNGQVVDKVGITNFTADKTSAKADNSDTITYTATVKKNGVAQANVPVSFNIVSGTATLSAKSANTNSSGKATVTLKSDKPGQVVVSAKTAEMTSALNANAVIFVDQTKASITEIKVDKTIATADNKDTIEYTVKVMKGGNPISGQKVTFSKDFGTLNKTEATTDQNGYATVKLSSGTPGKAIVSAKVSEVNTEVKAATVEFFAPLSIDGNKVTVIGTGVTGSLPKNWLQYGQVKLQATGGNGKYTWKSSNTKIASVDNSGVITLNEKGSATITVVSGDNQSATYTINTPDNIIIAVDKINRMAYSEAESRCQAISSNLAQSKSVLENIYSKWGAANKYPYYSSSNSLTAWIKQSTSDSASGVSNTYDLVTTNSLTNVKATDKNAFAVCVK.

The signal sequence occupies residues 1 to 41 (MIIHGFCTGTRHKHKLRKTFIMLGAGLGLFFSVNQNSFANG). In terms of domain architecture, LysM spans 63 to 112 (LFYTLKTGESVAQLSKSQGISVPVIWSLNKHLYSSESEMMKASPGQQIIL). Big-1 domains lie at 557–650 (ITNF…VIFV) and 657–748 (ITEI…VEFF). A BIG2 domain is found at 780-831 (KLQATGGNGKYTWKSSNTKIASVDNSGVITLNEKGSATITVVSGDNQSATYT). Cys857 and Cys934 are oxidised to a cystine.

This sequence belongs to the intimin/invasin family.

It localises to the cell outer membrane. Its function is as follows. An inverse autotransporter. The polypeptide is Intimin (eae) (Citrobacter freundii).